Consider the following 280-residue polypeptide: Diaminopimelate epimerase (280 aa).

The substrate site is built by Asn11 and Asn64. The active-site Proton donor is Cys73. Residues Gly74 to Asn75, Asn162, Asn195, and Glu213 to Arg214 each bind substrate. The Proton acceptor role is filled by Cys222. A substrate-binding site is contributed by Gly223–Thr224.

Belongs to the diaminopimelate epimerase family. As to quaternary structure, homodimer.

Its subcellular location is the cytoplasm. It carries out the reaction (2S,6S)-2,6-diaminopimelate = meso-2,6-diaminopimelate. The protein operates within amino-acid biosynthesis; L-lysine biosynthesis via DAP pathway; DL-2,6-diaminopimelate from LL-2,6-diaminopimelate: step 1/1. Its function is as follows. Catalyzes the stereoinversion of LL-2,6-diaminopimelate (L,L-DAP) to meso-diaminopimelate (meso-DAP), a precursor of L-lysine and an essential component of the bacterial peptidoglycan. This Pelotomaculum thermopropionicum (strain DSM 13744 / JCM 10971 / SI) protein is Diaminopimelate epimerase.